Reading from the N-terminus, the 941-residue chain is Glycine dehydrogenase (decarboxylating) (941 aa).

Lys-692 carries the N6-(pyridoxal phosphate)lysine modification.

Belongs to the GcvP family. The glycine cleavage system is composed of four proteins: P, T, L and H. It depends on pyridoxal 5'-phosphate as a cofactor.

The catalysed reaction is N(6)-[(R)-lipoyl]-L-lysyl-[glycine-cleavage complex H protein] + glycine + H(+) = N(6)-[(R)-S(8)-aminomethyldihydrolipoyl]-L-lysyl-[glycine-cleavage complex H protein] + CO2. Functionally, the glycine cleavage system catalyzes the degradation of glycine. The P protein binds the alpha-amino group of glycine through its pyridoxal phosphate cofactor; CO(2) is released and the remaining methylamine moiety is then transferred to the lipoamide cofactor of the H protein. The chain is Glycine dehydrogenase (decarboxylating) from Mycolicibacterium paratuberculosis (strain ATCC BAA-968 / K-10) (Mycobacterium paratuberculosis).